The sequence spans 339 residues: Phomopsene synthase (339 aa).

Residues Asp89, Asp94, Asn224, Ser228, and Glu232 each coordinate Mg(2+).

The protein belongs to the terpene synthase family. Mg(2+) is required as a cofactor.

It catalyses the reaction (2E,6E,10E)-geranylgeranyl diphosphate = phomopsene + diphosphate. The enzyme catalyses (2E,6E,10E)-geranylgeranyl diphosphate = allokutznerene + diphosphate. It functions in the pathway secondary metabolite biosynthesis; terpenoid biosynthesis. Functionally, diterpene synthase that catalyzes the conversion of geranylgeranyl diphosphate (GGPP) to phomopsene, a diterpene previously reported from the fungus P.amygdali. Phomopsene is the main product, but the enzyme can also produce allokutznerene (about 50% of phomopsene production activity) and traces of spiroviolene. Cannot use geranyl diphosphate (GPP), farnesyl diphosphate (FPP) and geranylfarnesyl diphosphate (GFPP). The protein is Phomopsene synthase of Allokutzneria albata (Kibdelosporangium albatum).